A 323-amino-acid polypeptide reads, in one-letter code: Acetyl esterase (323 aa).

An Involved in the stabilization of the negatively charged intermediate by the formation of the oxyanion hole motif is present at residues 91 to 93 (HGG). Catalysis depends on residues serine 165, aspartate 262, and histidine 292.

This sequence belongs to the 'GDXG' lipolytic enzyme family. As to quaternary structure, homodimer. Interacts with MalT and MelA.

It localises to the cytoplasm. Its function is as follows. Displays esterase activity towards short chain fatty esters (acyl chain length of up to 8 carbons). Able to hydrolyze triacetylglycerol (triacetin) and tributyrylglycerol (tributyrin), but not trioleylglycerol (triolein) or cholesterol oleate. Negatively regulates MalT activity by antagonizing maltotriose binding. Inhibits MelA galactosidase activity. This chain is Acetyl esterase, found in Salmonella dublin (strain CT_02021853).